The following is a 136-amino-acid chain: Large ribosomal subunit protein bL17 (136 aa).

It belongs to the bacterial ribosomal protein bL17 family. In terms of assembly, part of the 50S ribosomal subunit. Contacts protein L32.

This is Large ribosomal subunit protein bL17 from Rickettsia prowazekii (strain Madrid E).